A 139-amino-acid polypeptide reads, in one-letter code: Myosin light chain kinase, smooth muscle (139 aa).

The segment at 48–97 (APTGENAKAPEMKARRPKSSLPPVLGTESDATVKKKPAPKTPPKAAMPPQ) is disordered.

This sequence belongs to the protein kinase superfamily. CAMK Ser/Thr protein kinase family. In terms of assembly, interacts with SVIL. In terms of processing, the C-terminus is deglutamylated by AGTPBP1/CCP1, AGBL1/CCP4 and AGBL4/CCP6, leading to the formation of Myosin light chain kinase, smooth muscle, deglutamylated form. The consequences of C-terminal deglutamylation are unknown.

The enzyme catalyses L-seryl-[myosin light chain] + ATP = O-phospho-L-seryl-[myosin light chain] + ADP + H(+). The catalysed reaction is L-threonyl-[myosin light chain] + ATP = O-phospho-L-threonyl-[myosin light chain] + ADP + H(+). Phosphorylates a specific serine in the N-terminus of a myosin light chain. Also regulates actin-myosin interaction through a non-kinase activity. This chain is Myosin light chain kinase, smooth muscle (MYLK), found in Sus scrofa (Pig).